The sequence spans 296 residues: MHALGRTLALMLLIFITILVPESSCSVKGREEIPPDDSFPFSDDNIFPDGVGVTMEIEIITPVSVQIGIKAQLFCHPSPSKEATLRIWEITPRDWPSCRLPYRAELQQISKKICTERGTTRVPAHHQSSDLPIKSMALKHDGHYSCRIETTDGIFQERHSIQVPGENRTVVCEAIASKPAMQILWTPDEDCVTKSKSHNDTMIVRSKCHREKNNGHSVFCFISHLTDNWILSMEQNRGTTSILPSLLSILYVKLAVTVLIVGFAFFQKRNYFSSRDLVFMKERRSKRSVWQREALG.

Positions 1–25 (MHALGRTLALMLLIFITILVPESSC) are cleaved as a signal peptide. The Extracellular segment spans residues 26-245 (SVKGREEIPP…NRGTTSILPS (220 aa)). Residues 48–162 (PDGVGVTMEI…GIFQERHSIQ (115 aa)) form the Ig-like V-type domain. Residues Cys75 and Cys146 are joined by a disulfide bond. An Ig-like C2-type domain is found at 151-232 (TDGIFQERHS…SHLTDNWILS (82 aa)). 2 N-linked (GlcNAc...) asparagine glycosylation sites follow: Asn167 and Asn199. An intrachain disulfide couples Cys172 to Cys220. A helical membrane pass occupies residues 246–266 (LLSILYVKLAVTVLIVGFAFF). Residues 267–296 (QKRNYFSSRDLVFMKERRSKRSVWQREALG) lie on the Cytoplasmic side of the membrane.

The protein belongs to the CD200R family. As to quaternary structure, isoform 3 interacts with TYROBP. Isoform 8 does not interact with TYROBP. As to expression, expressed in uterus and bone marrow-derived mast cells (at protein level). Expressed in uterus, spleen, bone marrow-derived dendritic, basophil and mast cells. Expressed in the lung of N.brasiliensis-infected mice. Weakly expressed in brain, testis, lung and thymus.

Its subcellular location is the membrane. In terms of biological role, according to PubMed:15187158 isoform 4 is a receptor for the CD200 cell surface glycoprotein. According to PubMed:16081818 isoform 4 is not a receptor for the CD200/OX2 cell surface glycoprotein. Isoform 1, isoform 2 and isoform 3 are involved in the recruitment or surface expression of the TYROBP receptor. Isoform 6, isoform 7 and isoform 8 are not involved in the recruitment or surface expression of the TYROBP receptor. The polypeptide is Cell surface glycoprotein CD200 receptor 3 (Cd200r3) (Mus musculus (Mouse)).